A 347-amino-acid chain; its full sequence is Outer membrane protein A (347 aa).

The first 21 residues, 1–21 (MKKQALTIIFLLVSLVTGIQA), serve as a signal peptide directing secretion. The next 8 membrane-spanning stretches (beta stranded) occupy residues 26 to 36 (HWYLGTKMGWS), 63 to 74 (APVFGLFLGYEF), 78 to 86 (FSFEIENDT), 105 to 116 (NSLQLATKLSYP), 121 to 129 (FHIYTQLGG), 154 to 163 (PNVSLGAEYI), 168 to 175 (FITRLDYT), and 194 to 202 (DVALSFGWK). The segment at 207–218 (NINEIFSSYIPQ) is hinge-like. The OmpA-like domain maps to 220–347 (SDKQYVALNE…RRVEIEVLSD (128 aa)). Residues Cys321 and Cys333 are joined by a disulfide bond.

The protein belongs to the outer membrane OOP (TC 1.B.6) superfamily. OmpA family. As to quaternary structure, monomer and homodimer.

It localises to the cell outer membrane. With TolR probably plays a role in maintaining the position of the peptidoglycan cell wall in the periplasm. Acts as a porin with low permeability that allows slow penetration of small solutes; an internal gate slows down solute passage. The polypeptide is Outer membrane protein A (Buchnera aphidicola subsp. Schizaphis graminum (strain Sg)).